The sequence spans 121 residues: Glycine cleavage system H protein (121 aa).

In terms of domain architecture, Lipoyl-binding spans 16–98; sequence VATIGITAHA…EAGGWFAKVR (83 aa). Lys-57 is subject to N6-lipoyllysine.

It belongs to the GcvH family. As to quaternary structure, the glycine cleavage system is composed of four proteins: P, T, L and H. It depends on (R)-lipoate as a cofactor.

The glycine cleavage system catalyzes the degradation of glycine. The H protein shuttles the methylamine group of glycine from the P protein to the T protein. This Phenylobacterium zucineum (strain HLK1) protein is Glycine cleavage system H protein.